A 339-amino-acid polypeptide reads, in one-letter code: Dihydroorotate dehydrogenase (quinone) (339 aa).

Residues A62–K66 and T86 contribute to the FMN site. Substrate is bound at residue K66. N111–F115 lines the substrate pocket. Positions 139 and 172 each coordinate FMN. N172 is a substrate binding site. The active-site Nucleophile is S175. N177 contacts substrate. Residues K217 and T245 each coordinate FMN. Position 246-247 (N246–T247) interacts with substrate. Residues G268, G297, and Y318 to S319 contribute to the FMN site.

The protein belongs to the dihydroorotate dehydrogenase family. Type 2 subfamily. In terms of assembly, monomer. The cofactor is FMN.

Its subcellular location is the cell membrane. It carries out the reaction (S)-dihydroorotate + a quinone = orotate + a quinol. It functions in the pathway pyrimidine metabolism; UMP biosynthesis via de novo pathway; orotate from (S)-dihydroorotate (quinone route): step 1/1. Its function is as follows. Catalyzes the conversion of dihydroorotate to orotate with quinone as electron acceptor. This is Dihydroorotate dehydrogenase (quinone) from Shewanella sediminis (strain HAW-EB3).